A 406-amino-acid chain; its full sequence is Succinylornithine transaminase (406 aa).

N6-(pyridoxal phosphate)lysine is present on Lys252.

The protein belongs to the class-III pyridoxal-phosphate-dependent aminotransferase family. AstC subfamily. The cofactor is pyridoxal 5'-phosphate.

The enzyme catalyses N(2)-succinyl-L-ornithine + 2-oxoglutarate = N-succinyl-L-glutamate 5-semialdehyde + L-glutamate. It participates in amino-acid degradation; L-arginine degradation via AST pathway; L-glutamate and succinate from L-arginine: step 3/5. Its function is as follows. Catalyzes the transamination of N(2)-succinylornithine and alpha-ketoglutarate into N(2)-succinylglutamate semialdehyde and glutamate. Can also act as an acetylornithine aminotransferase. The sequence is that of Succinylornithine transaminase from Shigella sonnei (strain Ss046).